Reading from the N-terminus, the 264-residue chain is Phosphatidylglycerol--prolipoprotein diacylglyceryl transferase (264 aa).

A run of 7 helical transmembrane segments spans residues 14-34 (VGPL…LLFM), 57-77 (LLLY…VLFF), 89-109 (ILAI…VLVA), 127-147 (FIAP…FING), 176-196 (QLYQ…VYSA), 202-222 (KAVS…AEFF), and 235-255 (LGLS…VGLL). An a 1,2-diacyl-sn-glycero-3-phospho-(1'-sn-glycerol)-binding site is contributed by R140.

This sequence belongs to the Lgt family.

The protein localises to the cell inner membrane. The catalysed reaction is L-cysteinyl-[prolipoprotein] + a 1,2-diacyl-sn-glycero-3-phospho-(1'-sn-glycerol) = an S-1,2-diacyl-sn-glyceryl-L-cysteinyl-[prolipoprotein] + sn-glycerol 1-phosphate + H(+). Its pathway is protein modification; lipoprotein biosynthesis (diacylglyceryl transfer). Its function is as follows. Catalyzes the transfer of the diacylglyceryl group from phosphatidylglycerol to the sulfhydryl group of the N-terminal cysteine of a prolipoprotein, the first step in the formation of mature lipoproteins. The polypeptide is Phosphatidylglycerol--prolipoprotein diacylglyceryl transferase (Aromatoleum aromaticum (strain DSM 19018 / LMG 30748 / EbN1) (Azoarcus sp. (strain EbN1))).